Here is a 417-residue protein sequence, read N- to C-terminus: D-amino acid dehydrogenase (417 aa).

FAD is bound at residue 3-17 (VVILGSGVIGVTSAW).

It belongs to the DadA oxidoreductase family. The cofactor is FAD.

It carries out the reaction a D-alpha-amino acid + A + H2O = a 2-oxocarboxylate + AH2 + NH4(+). It functions in the pathway amino-acid degradation; D-alanine degradation; NH(3) and pyruvate from D-alanine: step 1/1. Oxidative deamination of D-amino acids. This is D-amino acid dehydrogenase from Edwardsiella ictaluri (strain 93-146).